A 498-amino-acid chain; its full sequence is Cytochrome P450 71B24 (498 aa).

A helical membrane pass occupies residues 1–21; that stretch reads MSILLYFIALLSLIIIKKIKD. Cys-442 provides a ligand contact to heme.

Belongs to the cytochrome P450 family. Heme is required as a cofactor.

It is found in the membrane. The polypeptide is Cytochrome P450 71B24 (CYP71B24) (Arabidopsis thaliana (Mouse-ear cress)).